A 380-amino-acid chain; its full sequence is MAPNIRKSHPLLKMINNSLIDLPAPSNISAWWNFGSLLAMCLATQILTGLLLAMHYTADTTLAFSSVAHTCRNVQYGWLIRNLHANGASFFFICIFLHIGRGLYYGSYLYKETWNTGVILLLTLMATAFVGYVLPWGQMSFGGATVITNLFSAIPYIGQALVEWAWGGFSVDNPTLTRFFALHFLLPFVIAGITIIHLIFLHESGSNNPLGISSNSDKIPFHPYYSLKDILGLTLMLTPLLTLALFSPNLLGDPENFTPANPLVTPPHIKPEWYFLFAYAILRSIPNKLGGVLALAASVLILLLIPFLHKSKQRTMTFRPLSQTLFWLLVANLLVLTWVGSQPVEHPFIIIGQMASFSYFTILLILFPMTSTLENKMFNH.

A run of 4 helical transmembrane segments spans residues 34–54 (FGSLLAMCLATQILTGLLLAM), 78–99 (WLIRNLHANGASFFFICIFLHI), 114–134 (WNTGVILLLTLMATAFVGYVL), and 179–199 (FFALHFLLPFVIAGITIIHLI). Heme b-binding residues include His84 and His98. His183 and His197 together coordinate heme b. His202 is an a ubiquinone binding site. 4 consecutive transmembrane segments (helical) span residues 227–247 (LKDILGLTLMLTPLLTLALFS), 289–309 (LGGVLALAASVLILLLIPFLH), 321–341 (LSQTLFWLLVANLLVLTWVGS), and 348–368 (FIIIGQMASFSYFTILLILFP).

The protein belongs to the cytochrome b family. In terms of assembly, the cytochrome bc1 complex contains 11 subunits: 3 respiratory subunits (MT-CYB, CYC1 and UQCRFS1), 2 core proteins (UQCRC1 and UQCRC2) and 6 low-molecular weight proteins (UQCRH/QCR6, UQCRB/QCR7, UQCRQ/QCR8, UQCR10/QCR9, UQCR11/QCR10 and a cleavage product of UQCRFS1). This cytochrome bc1 complex then forms a dimer. Heme b serves as cofactor.

Its subcellular location is the mitochondrion inner membrane. Functionally, component of the ubiquinol-cytochrome c reductase complex (complex III or cytochrome b-c1 complex) that is part of the mitochondrial respiratory chain. The b-c1 complex mediates electron transfer from ubiquinol to cytochrome c. Contributes to the generation of a proton gradient across the mitochondrial membrane that is then used for ATP synthesis. The protein is Cytochrome b (MT-CYB) of Tragopan temminckii (Temminck's tragopan).